Here is a 268-residue protein sequence, read N- to C-terminus: MTAAEAPLPPLAPRERTATTAAERRTGSPLAVSLSGVRKSFGDKTVLSGIDLEITRGEFVVLLGPSGTGKTTLLRLLSGLEPPDGGDVLVPRQRTVVYQEPRLIPSKRVLANVSVGQKRAQLTRDNARRALAEVNLADKERAWPATLSGGEAQRVALARALVREPELLLLDEPFAALDALTRLQMQDLVGDLVARHRPAVLLVTHDVDEAVRLADRVLILDNGGFAVDVDIDLPRPRDRNDPEALRYRATFLAQLGVGRPSSTRQDIS.

The interval 1 to 27 is disordered; that stretch reads MTAAEAPLPPLAPRERTATTAAERRTG. Over residues 13 to 26 the composition is skewed to basic and acidic residues; that stretch reads PRERTATTAAERRT. The ABC transporter domain occupies 32–247; that stretch reads VSLSGVRKSF…DRNDPEALRY (216 aa). 64 to 71 contacts ATP; that stretch reads GPSGTGKT.

The protein belongs to the ABC transporter superfamily. Aliphatic sulfonates importer (TC 3.A.1.17.2) family. In terms of assembly, the complex is composed of two ATP-binding proteins (SsuB), two transmembrane proteins (SsuC) and a solute-binding protein (SsuA).

It is found in the cell membrane. The catalysed reaction is ATP + H2O + aliphatic sulfonate-[sulfonate-binding protein]Side 1 = ADP + phosphate + aliphatic sulfonateSide 2 + [sulfonate-binding protein]Side 1.. Functionally, part of the ABC transporter complex SsuABC involved in aliphatic sulfonates import. Responsible for energy coupling to the transport system. This Rhodococcus jostii (strain RHA1) protein is Aliphatic sulfonates import ATP-binding protein SsuB 3.